Consider the following 236-residue polypeptide: Glyoxalase 3 (236 aa).

Catalysis depends on residues cysteine 136, histidine 137, and glutamate 168. Residue cysteine 136 is modified to Cysteine sulfinic acid (-SO2H).

The protein belongs to the peptidase C56 family. HSP31-like subfamily. Monomer.

The enzyme catalyses methylglyoxal + H2O = (R)-lactate + H(+). In terms of biological role, catalyzes the conversion of methylglyoxal (MG) to D-lactate in a single glutathione (GSH)-independent step. Selective for MG, does not use glyoxal as substrate. Plays a role in detoxifying endogenously produced MG, particularly when glycerol is the principal carbon source. Important for viability in stationary phase. The chain is Glyoxalase 3 from Candida albicans (strain SC5314 / ATCC MYA-2876) (Yeast).